A 462-amino-acid polypeptide reads, in one-letter code: Argininosuccinate lyase 2 (462 aa).

It belongs to the lyase 1 family. Argininosuccinate lyase subfamily.

The protein resides in the cytoplasm. It catalyses the reaction 2-(N(omega)-L-arginino)succinate = fumarate + L-arginine. The protein operates within amino-acid biosynthesis; L-arginine biosynthesis; L-arginine from L-ornithine and carbamoyl phosphate: step 3/3. This Shouchella clausii (strain KSM-K16) (Alkalihalobacillus clausii) protein is Argininosuccinate lyase 2.